Reading from the N-terminus, the 308-residue chain is Glutaminase (308 aa).

Positions 66, 117, 161, 168, 192, 244, and 262 each coordinate substrate.

It belongs to the glutaminase family. Homotetramer.

The enzyme catalyses L-glutamine + H2O = L-glutamate + NH4(+). This is Glutaminase from Shigella dysenteriae serotype 1 (strain Sd197).